A 579-amino-acid chain; its full sequence is MAGPDSPQQQQVEEKAEQIDDAELAFQGINMLLNNGFRESDELFRRYRTHSPLMSFGASFVSFLNAMMTFEEEKMQMASDDLRTTEKLCESDNAGVIETIRNKIKKSMDSGRSGVEIVDRLQRQIIVADCQVYLAVLSFVKQELSAYIKGGWILRKAWKMYNKCYSDISQLQEACRRRSSDQQGALASDQANHNTSTGSGGRVTDEVLDRLKGSVSFGYGLFHLCISMVPPHLLKIVNLLGFPGDRHQGLASLAYASESKDMKAPLATLALLWYHTVVQPFFALDGSDSRAGLLEAKAILQKKAMVYPNSSLFIFFKGRVQRLECQINSALASFQDALEFASDQREIQHVCLYEIGWCSMIEMSFEDAFRSFERLKNESRWSQCYYAYLTGVCQGASGDLEGAKGVFRDVQKLFKRKNNQIEQFALKRAEKLRKVSLTRELCILGVVEVLYLWKALPNCSSSKLQLMNQVLQGLDDQSSIGLKHLLLGAIQKCLGNIKDALQSFQLAAQDEYGRLNNSYVQPYACYELGCVLLAKPETLSKGRSLLLQAKENYAGYDFENRLHVRIHSALASIKEVVPH.

Over residues 182–197 (QQGALASDQANHNTST) the composition is skewed to polar residues. Positions 182–202 (QQGALASDQANHNTSTGSGGR) are disordered. 3 TPR repeats span residues 311-344 (SLFIFFKGRVQRLECQINSALASFQDALEFASDQ), 349-382 (HVCLYEIGWCSMIEMSFEDAFRSFERLKNESRWS), and 481-514 (GLKHLLLGAIQKCLGNIKDALQSFQLAAQDEYGR).

It belongs to the TTC39 family.

The protein is Tetratricopeptide repeat protein 39C (ttc39c) of Danio rerio (Zebrafish).